The sequence spans 114 residues: Iron-sulfur cluster insertion protein ErpA (114 aa).

Iron-sulfur cluster-binding residues include cysteine 42, cysteine 106, and cysteine 108.

Belongs to the HesB/IscA family. Homodimer. It depends on iron-sulfur cluster as a cofactor.

Functionally, required for insertion of 4Fe-4S clusters for at least IspG. The chain is Iron-sulfur cluster insertion protein ErpA from Erwinia tasmaniensis (strain DSM 17950 / CFBP 7177 / CIP 109463 / NCPPB 4357 / Et1/99).